We begin with the raw amino-acid sequence, 362 residues long: GTP 3',8-cyclase (362 aa).

One can recognise a Radical SAM core domain in the interval 8 to 228 (SLGRPLRDLR…ARISSHWPID (221 aa)). R17 contacts GTP. [4Fe-4S] cluster contacts are provided by C24 and C28. Y30 is a binding site for S-adenosyl-L-methionine. Residue C31 participates in [4Fe-4S] cluster binding. R71 provides a ligand contact to GTP. Residue G75 participates in S-adenosyl-L-methionine binding. T102 lines the GTP pocket. S126 lines the S-adenosyl-L-methionine pocket. K164 serves as a coordination point for GTP. M198 contributes to the S-adenosyl-L-methionine binding site. [4Fe-4S] cluster contacts are provided by C262 and C265. Residue 267–269 (RLR) participates in GTP binding. Residue C279 coordinates [4Fe-4S] cluster. Residues 325 to 362 (ALDSDGSREDADESEASAVPGRSTHPGHRKVEMSYIGG) are disordered.

Belongs to the radical SAM superfamily. MoaA family. Monomer and homodimer. Requires [4Fe-4S] cluster as cofactor.

The enzyme catalyses GTP + AH2 + S-adenosyl-L-methionine = (8S)-3',8-cyclo-7,8-dihydroguanosine 5'-triphosphate + 5'-deoxyadenosine + L-methionine + A + H(+). It functions in the pathway cofactor biosynthesis; molybdopterin biosynthesis. Its function is as follows. Catalyzes the cyclization of GTP to (8S)-3',8-cyclo-7,8-dihydroguanosine 5'-triphosphate. This chain is GTP 3',8-cyclase, found in Acidothermus cellulolyticus (strain ATCC 43068 / DSM 8971 / 11B).